The following is a 229-amino-acid chain: Ribonuclease 3 (229 aa).

Residues 4 to 133 (WEELQESVGF…FIGALYLDNG (130 aa)) form the RNase III domain. Glu-46 contacts Mg(2+). Asp-50 is a catalytic residue. The Mg(2+) site is built by Asp-119 and Glu-122. Residue Glu-122 is part of the active site. The region spanning 159 to 228 (DYKTQLQEIV…AQFAINQLTH (70 aa)) is the DRBM domain.

Belongs to the ribonuclease III family. In terms of assembly, homodimer. Mg(2+) serves as cofactor.

It localises to the cytoplasm. It carries out the reaction Endonucleolytic cleavage to 5'-phosphomonoester.. Functionally, digests double-stranded RNA. Involved in the processing of primary rRNA transcript to yield the immediate precursors to the large and small rRNAs (23S and 16S). Processes some mRNAs, and tRNAs when they are encoded in the rRNA operon. Processes pre-crRNA and tracrRNA of type II CRISPR loci if present in the organism. This is Ribonuclease 3 from Listeria welshimeri serovar 6b (strain ATCC 35897 / DSM 20650 / CCUG 15529 / CIP 8149 / NCTC 11857 / SLCC 5334 / V8).